A 120-amino-acid polypeptide reads, in one-letter code: NAD(P)H-quinone oxidoreductase subunit 3 (120 aa).

A run of 3 helical transmembrane segments spans residues 6–26 (GYDAFLGFLLIAAAVPVLALV), 64–84 (MFALVFVIFDVETVFLYPWAV), and 89–109 (LGLLAFIEALIFIAILLVALA).

The protein belongs to the complex I subunit 3 family. As to quaternary structure, NDH-1 can be composed of about 15 different subunits; different subcomplexes with different compositions have been identified which probably have different functions.

Its subcellular location is the cellular thylakoid membrane. It carries out the reaction a plastoquinone + NADH + (n+1) H(+)(in) = a plastoquinol + NAD(+) + n H(+)(out). It catalyses the reaction a plastoquinone + NADPH + (n+1) H(+)(in) = a plastoquinol + NADP(+) + n H(+)(out). Functionally, NDH-1 shuttles electrons from an unknown electron donor, via FMN and iron-sulfur (Fe-S) centers, to quinones in the respiratory and/or the photosynthetic chain. The immediate electron acceptor for the enzyme in this species is believed to be plastoquinone. Couples the redox reaction to proton translocation, and thus conserves the redox energy in a proton gradient. Cyanobacterial NDH-1 also plays a role in inorganic carbon-concentration. The sequence is that of NAD(P)H-quinone oxidoreductase subunit 3 from Synechococcus sp. (strain CC9902).